The primary structure comprises 263 residues: Chymotrypsinogen B2 (263 aa).

A signal peptide spans 1–18 (MAFLWLLSCWALLGTTFG). 5 disulfide bridges follow: Cys-19–Cys-140, Cys-60–Cys-76, Cys-154–Cys-219, Cys-186–Cys-200, and Cys-209–Cys-238. Residues 34-261 (IVNGEDAVPG…LIPWVQKILA (228 aa)) form the Peptidase S1 domain. Active-site charge relay system residues include His-75 and Asp-120. Ser-213 acts as the Charge relay system in catalysis.

It belongs to the peptidase S1 family.

The protein resides in the secreted. The protein localises to the extracellular space. It carries out the reaction Preferential cleavage: Tyr-|-Xaa, Trp-|-Xaa, Phe-|-Xaa, Leu-|-Xaa.. The chain is Chymotrypsinogen B2 (CTRB2) from Homo sapiens (Human).